Reading from the N-terminus, the 466-residue chain is Cysteine--tRNA ligase (466 aa).

C29 is a binding site for Zn(2+). A 'HIGH' region motif is present at residues 31-41 (PTVYNYIHIGN). Positions 209, 234, and 238 each coordinate Zn(2+). Residues 266-270 (KMSKS) carry the 'KMSKS' region motif. K269 serves as a coordination point for ATP. Residue S270 is modified to Phosphoserine.

The protein belongs to the class-I aminoacyl-tRNA synthetase family. In terms of assembly, monomer. Requires Zn(2+) as cofactor.

The protein localises to the cytoplasm. It catalyses the reaction tRNA(Cys) + L-cysteine + ATP = L-cysteinyl-tRNA(Cys) + AMP + diphosphate. The chain is Cysteine--tRNA ligase from Bacillus velezensis (strain DSM 23117 / BGSC 10A6 / LMG 26770 / FZB42) (Bacillus amyloliquefaciens subsp. plantarum).